The following is a 469-amino-acid chain: 3-isopropylmalate dehydratase large subunit (469 aa).

[4Fe-4S] cluster contacts are provided by Cys347, Cys407, and Cys410.

It belongs to the aconitase/IPM isomerase family. LeuC type 1 subfamily. In terms of assembly, heterodimer of LeuC and LeuD. [4Fe-4S] cluster is required as a cofactor.

It catalyses the reaction (2R,3S)-3-isopropylmalate = (2S)-2-isopropylmalate. It participates in amino-acid biosynthesis; L-leucine biosynthesis; L-leucine from 3-methyl-2-oxobutanoate: step 2/4. In terms of biological role, catalyzes the isomerization between 2-isopropylmalate and 3-isopropylmalate, via the formation of 2-isopropylmaleate. The chain is 3-isopropylmalate dehydratase large subunit from Synechococcus sp. (strain RCC307).